The following is a 1295-amino-acid chain: DNA-directed RNA polymerase subunit beta' (1295 aa).

Zn(2+) contacts are provided by Cys-60, Cys-62, Cys-75, and Cys-78. Asp-516, Asp-518, and Asp-520 together coordinate Mg(2+). Cys-841, Cys-914, Cys-921, and Cys-924 together coordinate Zn(2+).

Belongs to the RNA polymerase beta' chain family. The RNAP catalytic core consists of 2 alpha, 1 beta, 1 beta' and 1 omega subunit. When a sigma factor is associated with the core the holoenzyme is formed, which can initiate transcription. It depends on Mg(2+) as a cofactor. Requires Zn(2+) as cofactor.

It carries out the reaction RNA(n) + a ribonucleoside 5'-triphosphate = RNA(n+1) + diphosphate. DNA-dependent RNA polymerase catalyzes the transcription of DNA into RNA using the four ribonucleoside triphosphates as substrates. The chain is DNA-directed RNA polymerase subunit beta' from Dehalococcoides mccartyi (strain CBDB1).